The sequence spans 660 residues: Pentatricopeptide repeat-containing protein At1g03560, mitochondrial (660 aa).

Residues 1–12 (MRRFYRKPFSVP) constitute a mitochondrion transit peptide. PPR repeat units follow at residues 151-185 (NLEC…EFPM), 186-220 (TVSA…GIEP), 221-255 (TLYT…RIKP), 256-290 (DIVT…GHEA), 291-325 (DKIT…GIQV), 326-360 (PPHA…GSKP), 361-395 (NVAI…GFKP), 396-430 (DVVT…GLAI), 431-465 (NSMF…GCTR), 466-496 (DSYC…MEEE), 502-536 (TVYT…GITP), 537-571 (TAAC…GVIL), 574-605 (ACED…GREV), and 606-640 (PGRI…GYER).

The protein belongs to the PPR family. P subfamily.

It is found in the mitochondrion. This is Pentatricopeptide repeat-containing protein At1g03560, mitochondrial from Arabidopsis thaliana (Mouse-ear cress).